Consider the following 535-residue polypeptide: Heparanase (535 aa).

A signal peptide spans 1-27; sequence MLRLLLLWLWGPLGALAQGAPAGTAPT. Residues 54–56 and T89 contribute to the heparan sulfate group site; that span reads DAS. Positions 102 to 149 are cleaved as a propeptide — linker peptide; that stretch reads PTSEERSYWKSQVNHDICRSEPVSAAVLRKLQVEWPFQELLLLREQYQ. Cysteines 119 and 171 form a disulfide. Heparan sulfate group is bound at residue 150–154; the sequence is KEFKN. N-linked (GlcNAc...) asparagine glycosylation is found at N192 and N209. Catalysis depends on E217, which acts as the Proton donor. Heparan sulfate group contacts are provided by residues 262–272, H288, and R295; that span reads QPRGKTVKLLR. The tract at residues 280–409 is required for heterodimerization with the heparanase 8 kDa subunit; the sequence is EVIDSLTWHH…LLFKKLVGPR (130 aa). E335 serves as the catalytic Nucleophile. Heparan sulfate group contacts are provided by residues 340–342 and 381–383; these read YGG and GNY. The cysteines at positions 429 and 534 are disulfide-linked. An N-linked (GlcNAc...) asparagine glycan is attached at N451. The tract at residues 519 to 535 is required for transferring proheparanase to the Golgi apparatus, secretion and subsequent enzyme activity and for enhancement of PKB/AKT1 phosphorylation; the sequence is FSYGFFVIRNAKIAACI.

This sequence belongs to the glycosyl hydrolase 79 family. In terms of assembly, heterodimer; heterodimer formation between the 8 kDa and the 50 kDa subunits is required for enzyme activity. Interacts with TF; the interaction, inhibited by heparin, enhances the generation of activated factor X and activates coagulation. Interacts with HRG; the interaction is enhanced at acidic pH, partially inhibits binding of HPSE to cell surface receptors and modulates its enzymatic activity. Interacts with SDC1; the interaction enhances the shedding of SDC1. Interacts with HPSE2. Post-translationally, proteolytically processed. The cleavage of the 65 kDa form leads to the generation of a linker peptide, and the 8 kDa and 50 kDa products. The active form, the 8/50 kDa heterodimer, is resistant to degradation. Complete removal of the linker peptide appears to be a prerequisite to the complete activation of the enzyme. N-glycosylated. Glycosylation of the 50 kDa subunit appears to be essential for its solubility. As to expression, expressed in skin, mainly in the stratum granulosum and the first layer of the stratum corneum in the upper part of the epidermis. Also detected in hair follicles and in sebaceous glands.

The protein localises to the lysosome membrane. Its subcellular location is the secreted. It is found in the nucleus. It carries out the reaction endohydrolysis of (1-&gt;4)-beta-D-glycosidic bonds of heparan sulfate chains in heparan sulfate proteoglycan.. Inhibited by EDTA and activated by calcium and magnesium. Inhibited by laminarin sulfate and, to a lower extent, by heparin and sulfamin. Endoglycosidase that cleaves heparan sulfate proteoglycans (HSPGs) into heparan sulfate side chains and core proteoglycans. Participates in extracellular matrix (ECM) degradation and remodeling. Selectively cleaves the linkage between a glucuronic acid unit and an N-sulfo glucosamine unit carrying either a 3-O-sulfo or a 6-O-sulfo group. Can also cleave the linkage between a glucuronic acid unit and an N-sulfo glucosamine unit carrying a 2-O-sulfo group, but not linkages between a glucuronic acid unit and a 2-O-sulfated iduronic acid moiety. It is essentially inactive at neutral pH but becomes active under acidic conditions such as during tumor invasion and in inflammatory processes. Facilitates cell migration associated with metastasis, wound healing and inflammation. Enhances shedding of syndecans, and increases endothelial invasion and angiogenesis in myelomas. Acts as a procoagulant by increasing the generation of activation factor X in the presence of tissue factor and activation factor VII. Increases cell adhesion to the extracellular matrix (ECM), independent of its enzymatic activity. Induces AKT1/PKB phosphorylation via lipid rafts increasing cell mobility and invasion. Heparin increases this AKT1/PKB activation. Regulates osteogenesis. Enhances angiogenesis through up-regulation of SRC-mediated activation of VEGF. Implicated in hair follicle inner root sheath differentiation and hair homeostasis. This is Heparanase (Hpse) from Mus musculus (Mouse).